The chain runs to 367 residues: Flagellar P-ring protein (367 aa).

An N-terminal signal peptide occupies residues 1 to 21 (MKIIQTFFIITLLWLSQGVQA).

It belongs to the FlgI family. The basal body constitutes a major portion of the flagellar organelle and consists of four rings (L,P,S, and M) mounted on a central rod.

Its subcellular location is the periplasm. It localises to the bacterial flagellum basal body. Assembles around the rod to form the L-ring and probably protects the motor/basal body from shearing forces during rotation. This Nitrosococcus oceani (strain ATCC 19707 / BCRC 17464 / JCM 30415 / NCIMB 11848 / C-107) protein is Flagellar P-ring protein.